The following is a 53-amino-acid chain: UPF0391 membrane protein BP1737 (53 aa).

Helical transmembrane passes span 5 to 25 (AVVF…GIAA) and 30 to 50 (IAKI…LGGV).

Belongs to the UPF0391 family.

It localises to the cell membrane. The sequence is that of UPF0391 membrane protein BP1737 from Bordetella pertussis (strain Tohama I / ATCC BAA-589 / NCTC 13251).